Here is a 1058-residue protein sequence, read N- to C-terminus: Bromodomain-containing protein 1 (1058 aa).

Residues 1–12 (MRRKGRCHRGSA) show a composition bias toward basic residues. The segment at 1 to 26 (MRRKGRCHRGSAARHPSSPCSVKHSP) is disordered. Positions 31 to 80 (LTYAQAQRMVEIEIEGRLHRISIFDPLEIILEDDLTAQEMSECNSNKENS) are interaction with KAT7/HBO1 and histones. The segment at 92-116 (HKNNRVKKKNEALPSAHGTPASASA) is disordered. At serine 128 the chain carries Phosphoserine. The PHD-type 1 zinc-finger motif lies at 214–264 (DAVCCICMDGECQNSNVILFCDMCNLAVHQECYGVPYIPEGQWLCRHCLQS). The C2HC pre-PHD-type zinc-finger motif lies at 268–301 (PADCVLCPNKGGAFKKTDDDRWGHVVCALWIPEV). The segment at 325–389 (LTCYLCKQKG…RKTAYCDVHT (65 aa)) adopts a PHD-type 2 zinc-finger fold. N6-acetyllysine is present on residues lysine 368, lysine 516, and lysine 519. Glycyl lysine isopeptide (Lys-Gly) (interchain with G-Cter in SUMO2) cross-links involve residues lysine 554 and lysine 594. A Bromo domain is found at 562 to 666 (LRLTPLTVLL…DQGGVVLRQA (105 aa)). Disordered stretches follow at residues 755-776 (LSQQ…EEDG) and 791-868 (LETL…DSSF). Phosphoserine is present on serine 803. Low complexity predominate over residues 852-867 (SESSISSSNSPLCDSS). Residue lysine 903 is modified to N6-acetyllysine. Arginine 906 bears the Phosphoserine mark. One can recognise a PWWP domain in the interval 929-1012 (PLKVVWAKCS…KSKMVPLGID (84 aa)). 2 positions are modified to phosphoserine: serine 1052 and serine 1055.

As to quaternary structure, component of some HBO1 complex composed of KAT7/HBO1, MEAF6, ING4 and BRD1/BRPF2. Component of the MOZ/MORF complex composed at least of ING5, KAT6A, KAT6B, MEAF6 and one of BRPF1, BRD1/BRPF2 and BRPF3. Interacts (via PHD-type zinc finger domain) with unmodified histone H3. Interacts (via PWWP domain) with dimethylated and trimethylated 'Lys-79' on histone H3. In terms of tissue distribution, highly expressed in testis.

The protein localises to the nucleus. It is found in the chromosome. Scaffold subunit of various histone acetyltransferase (HAT) complexes, such as the MOZ/MORF and HBO1 complexes, that acts as a regulator of hematopoiesis. Plays a key role in HBO1 complex by directing KAT7/HBO1 specificity towards histone H3 'Lys-14' acetylation (H3K14ac), thereby promoting erythroid differentiation. The sequence is that of Bromodomain-containing protein 1 from Homo sapiens (Human).